We begin with the raw amino-acid sequence, 691 residues long: F-box/LRR-repeat protein 5 (691 aa).

The interval 1–159 (MAPFPEEVDV…IKKKVIAQHC (159 aa)) is hemerythrin-like. Fe(3+) contacts are provided by histidine 15, histidine 57, glutamate 58, glutamate 61, histidine 80, histidine 126, and glutamate 130. In terms of domain architecture, F-box spans 202–248 (STGITHLPPEVMVSIFSYLNPQELCRCSQVSTKWSQLAKTGSLWKHL). 7 LRR repeats span residues 340 to 364 (SSAV…LDLT), 365 to 392 (QTDI…DLSG), 393 to 418 (CEKI…ESGL), 479 to 508 (VWML…CVME), 576 to 607 (TRLL…SLSG), 608 to 635 (CYQI…NLSG), and 636 to 661 (CLTV…YFYY). Cysteine 662, cysteine 676, cysteine 686, and cysteine 687 together coordinate [2Fe-2S] cluster.

In terms of assembly, part of a SCF (SKP1-cullin-F-box) protein ligase complex. Interacts with ACO1/IRP1, IREB2/IRP2; the interaction depends on the [2Fe-2S] cluster. Interacts with DCTN1/p150-glued. It depends on [2Fe-2S] cluster as a cofactor. Polybiquitinated upon iron and oxygen depletion, leading to its degradation by the proteasome. Ubiquitination is regulated by the hemerythrin-like region that acts as an oxygen and iron sensor. Undergoes constitutive ubiquitin-dependent degradation at the steady state by HERC2.

The protein resides in the cytoplasm. It is found in the perinuclear region. It localises to the nucleus. It participates in protein modification; protein ubiquitination. With respect to regulation, an iron-sulfur cluster promotes IRP2 polyubiquitination and degradation in response to both iron and oxygen concentrations. In terms of biological role, component of some SCF (SKP1-cullin-F-box) protein ligase complex that plays a central role in iron homeostasis by promoting the ubiquitination and subsequent degradation of IREB2/IRP2. The C-terminal domain of FBXL5 contains a redox-sensitive [2Fe-2S] cluster that, upon oxidation, promotes binding to IRP2 to effect its oxygen-dependent degradation. Under iron deficiency conditions, the N-terminal hemerythrin-like (Hr) region, which contains a diiron metal center, cannot bind iron and undergoes conformational changes that destabilize the FBXL5 protein and cause its ubiquitination and degradation. When intracellular iron levels start rising, the Hr region is stabilized. Additional increases in iron levels facilitate the assembly and incorporation of a redox active [2Fe-2S] cluster in the C-terminal domain. Only when oxygen level is high enough to maintain the cluster in its oxidized state can FBXL5 recruit IRP2 as a substrate for polyubiquination and degradation. Promotes ubiquitination and subsequent degradation of the dynactin complex component DCTN1. Within the nucleus, promotes the ubiquitination of SNAI1; preventing its interaction with DNA and promoting its degradation. Negatively regulates DNA damage response by mediating the ubiquitin-proteasome degradation of the DNA repair protein NABP2. The polypeptide is F-box/LRR-repeat protein 5 (FBXL5) (Bos taurus (Bovine)).